The chain runs to 390 residues: Chorismate synthase 2 (390 aa).

R39 and R45 together coordinate NADP(+). FMN-binding positions include 132–134 (RSS), 253–254 (NA), G298, 313–317 (KPIPT), and R339.

The protein belongs to the chorismate synthase family. Homotetramer. FMNH2 is required as a cofactor.

The enzyme catalyses 5-O-(1-carboxyvinyl)-3-phosphoshikimate = chorismate + phosphate. It functions in the pathway metabolic intermediate biosynthesis; chorismate biosynthesis; chorismate from D-erythrose 4-phosphate and phosphoenolpyruvate: step 7/7. Catalyzes the anti-1,4-elimination of the C-3 phosphate and the C-6 proR hydrogen from 5-enolpyruvylshikimate-3-phosphate (EPSP) to yield chorismate, which is the branch point compound that serves as the starting substrate for the three terminal pathways of aromatic amino acid biosynthesis. This reaction introduces a second double bond into the aromatic ring system. The polypeptide is Chorismate synthase 2 (Bacillus cereus (strain ATCC 14579 / DSM 31 / CCUG 7414 / JCM 2152 / NBRC 15305 / NCIMB 9373 / NCTC 2599 / NRRL B-3711)).